A 327-amino-acid polypeptide reads, in one-letter code: Ribosomal RNA small subunit methyltransferase H (327 aa).

S-adenosyl-L-methionine-binding positions include 41 to 43, aspartate 60, tyrosine 87, aspartate 108, and glutamine 115; that span reads GGH. The segment at 292–327 is disordered; that stretch reads AERADEQETLENPRAASARLRAVERLRETTTPGSAR.

This sequence belongs to the methyltransferase superfamily. RsmH family.

It localises to the cytoplasm. It catalyses the reaction cytidine(1402) in 16S rRNA + S-adenosyl-L-methionine = N(4)-methylcytidine(1402) in 16S rRNA + S-adenosyl-L-homocysteine + H(+). Specifically methylates the N4 position of cytidine in position 1402 (C1402) of 16S rRNA. This Kocuria rhizophila (strain ATCC 9341 / DSM 348 / NBRC 103217 / DC2201) protein is Ribosomal RNA small subunit methyltransferase H.